Reading from the N-terminus, the 1274-residue chain is RNA-directed RNA polymerase VP2 (1274 aa).

One can recognise a RdRp catalytic domain in the interval 561–798 (LSTTSGSVVT…KLYALMGCRI (238 aa)).

The protein belongs to the reoviridae RNA-directed RNA polymerase family.

Its subcellular location is the virion. The catalysed reaction is RNA(n) + a ribonucleoside 5'-triphosphate = RNA(n+1) + diphosphate. Its function is as follows. RNA-directed RNA polymerase that is involved in transcription and genome replication. Following infection, it catalyzes the synthesis of fully conservative plus strands. After core assembly, which consists in recruitment of one capped plus-strand for each genomic segments and polymerase complexes, the polymerase switches mode and catalyzes the synthesis of complementary minus-strands. This is RNA-directed RNA polymerase VP2 (S2) from Aquareovirus C (isolate Golden shiner/USA/GSRV/1977) (AQRV-C).